Consider the following 534-residue polypeptide: NAD(P)H-quinone oxidoreductase chain 4 2 (534 aa).

The next 14 helical transmembrane spans lie at 9–29 (FPWLTTVIAYPVLAALFIPLI), 51–71 (WFALFIAVTDLLILLAGFYVG), 106–126 (LILLTAFITTLAILAAWPVTL), 130–150 (LFYFLMLAMYGGQIGVFAVQD), 152–172 (LLFFLMWELELIPVYLLLSIW), 184–204 (FILYTALSSLFILVAGLAMAF), 227–247 (LLMYGAFLIAYGVKLPIFPLH), 258–278 (TAPVHMLLAGILLKMGGYALM), 290–310 (LYFAPVLIVLGVVNIIFAALT), 326–346 (ISHMGFVLIGIGSLTEIGMSG), 347–367 (AMLQMISHGLIGASLFFLVGA), 399–419 (LASLALPGMSGFVAEIMVFIG), 432–452 (LVVVFLAAVGVILTPIYLLSM), and 479–499 (VFIIACLLIPIIGIGLYPKLV).

It belongs to the complex I subunit 4 family.

It localises to the cellular thylakoid membrane. It catalyses the reaction a plastoquinone + NADH + (n+1) H(+)(in) = a plastoquinol + NAD(+) + n H(+)(out). It carries out the reaction a plastoquinone + NADPH + (n+1) H(+)(in) = a plastoquinol + NADP(+) + n H(+)(out). Functionally, NDH-1 shuttles electrons from NAD(P)H, via FMN and iron-sulfur (Fe-S) centers, to quinones in the respiratory chain. The immediate electron acceptor for the enzyme in this species is believed to be plastoquinone. Couples the redox reaction to proton translocation (for every two electrons transferred, four hydrogen ions are translocated across the cytoplasmic membrane), and thus conserves the redox energy in a proton gradient. In Synechococcus sp. (strain JA-2-3B'a(2-13)) (Cyanobacteria bacterium Yellowstone B-Prime), this protein is NAD(P)H-quinone oxidoreductase chain 4 2.